A 350-amino-acid polypeptide reads, in one-letter code: Twinfilin-1 (350 aa).

Position 2 is an N-acetylserine (Ser2). In terms of domain architecture, ADF-H 1 spans 2 to 139 (SHQTGIQASE…SLHGYKKYLL (138 aa)). 2 positions are modified to phosphoserine: Ser143 and Ser277. One can recognise an ADF-H 2 domain in the interval 177–313 (GVAFPISQEA…TADFLYEEVH (137 aa)). Tyr309 is modified (phosphotyrosine). Residues 316–350 (QHAHKQSFAKPKGPSGKRGIRRIIRGPAETEATTE) form a disordered region. Thr349 carries the post-translational modification Phosphothreonine.

The protein belongs to the actin-binding proteins ADF family. Twinfilin subfamily. In terms of assembly, interacts with G-actin; ADP-actin form and capping protein (CP). May also be able to interact with TWF2 and phosphoinositides, PI(4,5)P2. When bound to PI(4,5)P2, it is down-regulated. Interacts with ACTG1. Post-translationally, phosphorylated on serine and threonine residues.

The protein localises to the cytoplasm. It localises to the cytoskeleton. Functionally, actin-binding protein involved in motile and morphological processes. Inhibits actin polymerization, likely by sequestering G-actin. By capping the barbed ends of filaments, it also regulates motility. Seems to play an important role in clathrin-mediated endocytosis and distribution of endocytic organelles. The sequence is that of Twinfilin-1 (TWF1) from Bos taurus (Bovine).